A 1415-amino-acid chain; its full sequence is DNA-directed RNA polymerase subunit beta' (1415 aa).

Zn(2+)-binding residues include cysteine 214, cysteine 294, cysteine 301, and cysteine 304. Polar residues predominate over residues 1335–1351; sequence QNFVDSQGKPQSQSSFI. The interval 1335 to 1390 is disordered; that stretch reads QNFVDSQGKPQSQSSFIDDSMSEFSPVKDKSGSVLDDSDFPPGNFDSDFPADNYDL.

Belongs to the RNA polymerase beta' chain family. RpoC2 subfamily. As to quaternary structure, in cyanobacteria the RNAP catalytic core is composed of 2 alpha, 1 beta, 1 beta', 1 gamma and 1 omega subunit. When a sigma factor is associated with the core the holoenzyme is formed, which can initiate transcription. Zn(2+) is required as a cofactor.

It catalyses the reaction RNA(n) + a ribonucleoside 5'-triphosphate = RNA(n+1) + diphosphate. Functionally, DNA-dependent RNA polymerase catalyzes the transcription of DNA into RNA using the four ribonucleoside triphosphates as substrates. This chain is DNA-directed RNA polymerase subunit beta', found in Trichodesmium erythraeum (strain IMS101).